The chain runs to 199 residues: Phycocyanobilin lyase CpcT (199 aa).

It belongs to the CpcT/CpeT biliprotein lyase family.

Functionally, catalyzes the site-selective attachment of phycocyanobilin (PCB) to 'Cys-154' of C-phycocyanin subunit beta (CpcB) and to 'Cys-153' of phycoerythrocyanin subunit beta (PecB). Does not have chromophore lyase activity for ApcA1, ApcA2, ApcB, ApcD, ApcF or PecA. The protein is Phycocyanobilin lyase CpcT (cpcT1) of Nostoc sp. (strain PCC 7120 / SAG 25.82 / UTEX 2576).